Here is a 296-residue protein sequence, read N- to C-terminus: Phosphatidylglycerol--prolipoprotein diacylglyceryl transferase (296 aa).

The next 4 membrane-spanning stretches (helical) occupy residues 10–30, 57–77, 92–112, and 119–139; these read IAFS…LAAF, LLFY…MLFY, VWEG…ACWL, and LHFF…LGFG. A 1,2-diacyl-sn-glycero-3-phospho-(1'-sn-glycerol) is bound at residue R140. The next 3 membrane-spanning stretches (helical) occupy residues 194 to 214, 220 to 240, and 254 to 274; these read QLYE…TFSM, YAVS…VEFV, and WLTM…VLLA.

It belongs to the Lgt family.

The protein localises to the cell inner membrane. The enzyme catalyses L-cysteinyl-[prolipoprotein] + a 1,2-diacyl-sn-glycero-3-phospho-(1'-sn-glycerol) = an S-1,2-diacyl-sn-glyceryl-L-cysteinyl-[prolipoprotein] + sn-glycerol 1-phosphate + H(+). It participates in protein modification; lipoprotein biosynthesis (diacylglyceryl transfer). Functionally, catalyzes the transfer of the diacylglyceryl group from phosphatidylglycerol to the sulfhydryl group of the N-terminal cysteine of a prolipoprotein, the first step in the formation of mature lipoproteins. The polypeptide is Phosphatidylglycerol--prolipoprotein diacylglyceryl transferase (Xanthomonas axonopodis pv. citri (strain 306)).